The following is an 874-amino-acid chain: Probable inorganic carbon transporter subunit DabA (874 aa).

Residues cysteine 398, aspartate 400, histidine 580, and cysteine 595 each contribute to the Zn(2+) site.

Belongs to the inorganic carbon transporter (TC 9.A.2) DabA family. Forms a complex with DabB. Requires Zn(2+) as cofactor.

It localises to the cell membrane. Functionally, part of an energy-coupled inorganic carbon pump. The sequence is that of Probable inorganic carbon transporter subunit DabA from Bacillus cytotoxicus (strain DSM 22905 / CIP 110041 / 391-98 / NVH 391-98).